The chain runs to 168 residues: MRVLGIDPGLRNMGWGVIDVSGTRLAHVANGICHSDSGDLAHRLLSLHGQLTDVLARFQPDTAAVEHTFVNKDGVATLKLGQARGIALLVPAQAGLAVGEYAPNAVKKTVVGVGHAAKEQIQHMVRLHLPGVHLAGPDAADALAVAICHAHHVQSSGRLEAALARAAR.

Catalysis depends on residues Asp7, Glu66, and Asp138. Mg(2+) contacts are provided by Asp7, Glu66, and Asp138.

This sequence belongs to the RuvC family. Homodimer which binds Holliday junction (HJ) DNA. The HJ becomes 2-fold symmetrical on binding to RuvC with unstacked arms; it has a different conformation from HJ DNA in complex with RuvA. In the full resolvosome a probable DNA-RuvA(4)-RuvB(12)-RuvC(2) complex forms which resolves the HJ. Requires Mg(2+) as cofactor.

It is found in the cytoplasm. The catalysed reaction is Endonucleolytic cleavage at a junction such as a reciprocal single-stranded crossover between two homologous DNA duplexes (Holliday junction).. Its function is as follows. The RuvA-RuvB-RuvC complex processes Holliday junction (HJ) DNA during genetic recombination and DNA repair. Endonuclease that resolves HJ intermediates. Cleaves cruciform DNA by making single-stranded nicks across the HJ at symmetrical positions within the homologous arms, yielding a 5'-phosphate and a 3'-hydroxyl group; requires a central core of homology in the junction. The consensus cleavage sequence is 5'-(A/T)TT(C/G)-3'. Cleavage occurs on the 3'-side of the TT dinucleotide at the point of strand exchange. HJ branch migration catalyzed by RuvA-RuvB allows RuvC to scan DNA until it finds its consensus sequence, where it cleaves and resolves the cruciform DNA. In Cereibacter sphaeroides (strain ATCC 17023 / DSM 158 / JCM 6121 / CCUG 31486 / LMG 2827 / NBRC 12203 / NCIMB 8253 / ATH 2.4.1.) (Rhodobacter sphaeroides), this protein is Crossover junction endodeoxyribonuclease RuvC.